The primary structure comprises 376 residues: Protein XRP2 (376 aa).

The segment at 1-55 is disordered; it reads MGCFFSKKSRRKSPKKDAALPTGDESATGNDLAETNNTALGSNSNQEAPKQYSWD. Glycine 2 carries the N-myristoyl glycine lipid modification. Cysteine 3 carries the S-palmitoyl cysteine lipid modification. The segment covering 25–48 has biased composition (polar residues); sequence ESATGNDLAETNNTALGSNSNQEA. Positions 49–204 constitute a C-CAP/cofactor C-like domain; the sequence is PKQYSWDKRE…NWSNIHDFTP (156 aa). Residues 123–124 and 140–143 contribute to the GTP site; these read GS and QQFR.

The protein belongs to the TBCC family. Post-translationally, myristoylated on Gly-2; which may be required for membrane targeting. In terms of processing, palmitoylated on Cys-3; which may be required for plasma membrane targeting. In the retina, detected in both rod and cone photoreceptors (at protein level). Has strongest expression in the retinal outer nuclear layer (ONL) and weaker expression in the outer plexiform layer (OPL) and inner plexiform layer (IPL) (at protein level). Expressed in all tissues tested.

The protein resides in the cell membrane. Its subcellular location is the cell projection. The protein localises to the cilium. Its function is as follows. Acts as a GTPase-activating protein (GAP) involved in trafficking between the Golgi and the ciliary membrane. Acts as a GTPase-activating protein (GAP) for tubulin in concert with tubulin-specific chaperone C, but does not enhance tubulin heterodimerization. In the retina, required for maintenance of rod and cone photoreceptor cells. May have a role in normal retinal localization of the transducins GNB1 and GNAT1, and the rhodopsin kinase GRK1. This chain is Protein XRP2, found in Danio rerio (Zebrafish).